Here is a 716-residue protein sequence, read N- to C-terminus: Ciliary WD repeat-containing protein ctxp80 (716 aa).

Residues 1–53 are disordered; sequence MGCGGSSGASDPSSEKINWNNAEIHDEFKQEQKKAGAKRKAFDKTTGKAVEKE. Positions 8 to 21 are enriched in polar residues; sequence GASDPSSEKINWNN. Over residues 23–53 the composition is skewed to basic and acidic residues; it reads EIHDEFKQEQKKAGAKRKAFDKTTGKAVEKE. WD repeat units follow at residues 167–208, 213–254, 257–297, 305–343, 345–382, 424–462, 529–568, 571–610, 639–678, and 683–715; these read YHTN…KKGR, KGGR…QVKK, SGPD…FKKK, GKPT…STYD, HGKG…AEKT, HSDG…STAL, DSGE…KLGT, AHNS…QDPS, TDGT…GATP, and GHSE…QWKK.

This sequence belongs to the WD repeat EMAP family.

This chain is Ciliary WD repeat-containing protein ctxp80, found in Euplotoides octocarinatus (Freshwater ciliate).